The sequence spans 718 residues: Methionine--tRNA ligase (718 aa).

A 'HIGH' region motif is present at residues 12–22 (PYANGDIHLGH). 4 residues coordinate Zn(2+): Cys-143, Cys-146, Cys-156, and Cys-159. A 'KMSKS' region motif is present at residues 349–353 (KMSKS). Lys-352 contacts ATP. Residues 573 to 599 (AAPAAKVASSQQRHAEKQQHEAQSAET) are disordered. One can recognise a tRNA-binding domain in the interval 608–718 (DFTKVDLRIA…TGAASGMRVK (111 aa)).

This sequence belongs to the class-I aminoacyl-tRNA synthetase family. MetG type 1 subfamily. In terms of assembly, homodimer. It depends on Zn(2+) as a cofactor.

The protein resides in the cytoplasm. It catalyses the reaction tRNA(Met) + L-methionine + ATP = L-methionyl-tRNA(Met) + AMP + diphosphate. Its function is as follows. Is required not only for elongation of protein synthesis but also for the initiation of all mRNA translation through initiator tRNA(fMet) aminoacylation. This Aromatoleum aromaticum (strain DSM 19018 / LMG 30748 / EbN1) (Azoarcus sp. (strain EbN1)) protein is Methionine--tRNA ligase.